Here is a 130-residue protein sequence, read N- to C-terminus: MYSGICIYMFLAMLSTSSSGQQATGSHNENPVATELEQSLTEHHRHVRVPSSAGQLKPIQRLDGNVDQKANIGALLAKYLQQARKGPTGRISMMGNRVQNIDPTHRINDRDYMGWMDFGRRSAEEYEYSS.

An N-terminal signal peptide occupies residues 1 to 20 (MYSGICIYMFLAMLSTSSSG). The propeptide occupies 21–60 (QQATGSHNENPVATELEQSLTEHHRHVRVPSSAGQLKPIQ). Tyr112 carries the sulfotyrosine modification. Phe118 carries the post-translational modification Phenylalanine amide. The propeptide occupies 122–130 (SAEEYEYSS). 2 positions are modified to sulfotyrosine: Tyr126 and Tyr128.

It belongs to the gastrin/cholecystokinin family. The precursor is cleaved by proteases to produce a number of active cholecystokinins. As to expression, expressed in brain, duodenum and small intestine.

The protein localises to the secreted. Functionally, this peptide hormone induces gall bladder contraction and the release of pancreatic enzymes in the gut. Its function in the brain is not clear. This is Cholecystokinin from Trachemys scripta (Red-eared slider turtle).